The sequence spans 495 residues: NADH-ubiquinone oxidoreductase chain 4 (495 aa).

Transmembrane regions (helical) follow at residues 9–29 (YSNLSGLILLPLLGSLIILVI), 37–57 (IRGITIWTSLITFLYSLFFWI), 89–109 (ISLFFVILTTFLTPICILVGF), 118–138 (EYMIAFFICESFLIAVFCSLD), 139–159 (LLIFYVFFESVLIPMFIIIGV), 173–193 (FFLYTLMGSLFMLLAILFIFF), 214–234 (ILLWIAFFASFSVKVPMVPVH), 245–265 (PTAGSVILAGILLKLGTYGFL), 272–292 (FPEATLYFTPFIYTLSVIAII), 307–327 (IIAYSSVAHMNFVTIGMFSLN), 335–355 (ILLMLSHGLVSSALFLCVGAL), 367–387 (YGGLVSTMPIFSTIFLFFTLA), 413–433 (LVATLAALGMILGAAYSLWLY), and 457–477 (VLIFLPFIVGVIWMGVYPEVF).

Belongs to the complex I subunit 4 family.

Its subcellular location is the mitochondrion membrane. It carries out the reaction a ubiquinone + NADH + 5 H(+)(in) = a ubiquinol + NAD(+) + 4 H(+)(out). In terms of biological role, core subunit of the mitochondrial membrane respiratory chain NADH dehydrogenase (Complex I) that is believed to belong to the minimal assembly required for catalysis. Complex I functions in the transfer of electrons from NADH to the respiratory chain. The immediate electron acceptor for the enzyme is believed to be ubiquinone. In Marchantia polymorpha (Common liverwort), this protein is NADH-ubiquinone oxidoreductase chain 4 (ND4).